A 901-amino-acid polypeptide reads, in one-letter code: HTH-type transcriptional regulator MalT (901 aa).

39-46 (SPAGYGKT) lines the ATP pocket. Positions 829–894 (ELIRTSPLTQ…DAVQHAQQLL (66 aa)) constitute an HTH luxR-type domain. The segment at residues 853-872 (NEQIAGELDVAATTIKTHIR) is a DNA-binding region (H-T-H motif).

The protein belongs to the MalT family. Monomer in solution. Oligomerizes to an active state in the presence of the positive effectors ATP and maltotriose.

Activated by ATP and maltotriose, which are both required for DNA binding. Positively regulates the transcription of the maltose regulon whose gene products are responsible for uptake and catabolism of malto-oligosaccharides. Specifically binds to the promoter region of its target genes, recognizing a short DNA motif called the MalT box. The sequence is that of HTH-type transcriptional regulator MalT from Klebsiella pneumoniae (strain 342).